The sequence spans 649 residues: MESCNVELIFDHIGHFGRFQIVLYLICAYQSLSCGIHYLSSVFLSIIPEHACKPPGMVRKAVFHNVSAWRLEDILALRSPEHKDHIMVELQDGEIWELTRCSRTWRENTSHLGYEYSGYKHDSPCFDGYVYDQSKWRNSAVRNFNLVCDQKWYARMIQPLIIFGVMLGSITFSYLSDRFGRRMALWCTSIGVFFFGIASLFIFDYLSFMITRFFLVMASSGYFVVVFVYVMEIIGKKARTWASIHLNTFFAIGAMLVALASYLLKTWWLYQIILCIVTTPFILCCWMLPETPFWLLSEGRYKEAQGTVDTMAVWNKSSSCDLVELLSLDVTRSHNKSPHSIRKHRLADLFHNLDVAKMTLIVWLDWFTANLGYYMFGKEVIRRKENEPLYLLLVGAMEIPAYICLCIWLKRVGRRKTMLLFLLVSSLTCMLHVVMPSDYKTAKRMVALLVKSVISSVFAFIYLYTAELYPTTVRCLAVGSSNMVSHVSSIFIPFTSHFSKVWIFLPQILFGILAILSGLLSLKLPETQDTPMKSTWETTEQQVPENKDSLGEGPPDSFERWDSSRALSFAERWGLSRASPDAEKWGSGRVPPDAGKWGAGIAPPVTERGASGRASLEDESGGSGRAPPEKNTEMENEIENMKVSNLGGF.

A helical transmembrane segment spans residues 19–39; sequence FQIVLYLICAYQSLSCGIHYL. N-linked (GlcNAc...) asparagine glycosylation is found at asparagine 65 and asparagine 108. 5 helical membrane-spanning segments follow: residues 156–176, 190–210, 214–234, 244–264, and 268–288; these read MIQP…SYLS, IGVF…SFMI, FLVM…MEII, IHLN…SYLL, and WLYQ…CWML. N-linked (GlcNAc...) asparagine glycosylation is present at asparagine 315. 6 helical membrane passes run 356-376, 389-409, 417-437, 445-465, 475-495, and 501-521; these read AKMT…YYMF, LYLL…CIWL, TMLL…VMPS, MVAL…YLYT, CLAV…IPFT, and VWIF…GLLS. A compositionally biased stretch (polar residues) spans 530–544; it reads TPMKSTWETTEQQVP. Disordered regions lie at residues 530–560 and 579–649; these read TPMK…SFER and SPDA…LGGF.

This sequence belongs to the major facilitator (TC 2.A.1) superfamily. Organic cation transporter (TC 2.A.1.19) family.

It localises to the cell membrane. The catalysed reaction is (R)-carnitine(in) = (R)-carnitine(out). It catalyses the reaction spermidine(in) = spermidine(out). Functionally, facilitative organic cation transporter that mediates the transport of carnitine as well as the polyamine spermidine. Mediates the partially Na(+)-dependent bidirectional transport of carnitine. May mediate L-carnitine secretion from testis epididymal epithelium into the lumen which is involved in the maturation of spermatozoa. The chain is Solute carrier family 22 member 16 from Mus musculus (Mouse).